A 231-amino-acid polypeptide reads, in one-letter code: Large ribosomal subunit protein uL1 (231 aa).

Belongs to the universal ribosomal protein uL1 family. In terms of assembly, part of the 50S ribosomal subunit.

Binds directly to 23S rRNA. The L1 stalk is quite mobile in the ribosome, and is involved in E site tRNA release. Its function is as follows. Protein L1 is also a translational repressor protein, it controls the translation of the L11 operon by binding to its mRNA. In Methylocella silvestris (strain DSM 15510 / CIP 108128 / LMG 27833 / NCIMB 13906 / BL2), this protein is Large ribosomal subunit protein uL1.